The chain runs to 250 residues: Solute carrier family 66 member 2 (250 aa).

Residues 14–80 (RMLVSWGASC…HHFESPLLWQ (67 aa)) enclose the PQ-loop 1 domain. 6 consecutive transmembrane segments (helical) span residues 15 to 35 (MLVS…PYIP), 49 to 69 (FSIY…LFWF), 72 to 92 (HFES…LLML), 118 to 138 (FFWH…FTGV), 151 to 173 (LFVE…PQLY), and 212 to 232 (FSIC…QVYL). The PQ-loop 2 domain maps to 149 to 215 (SPLFVEILGF…NQAPFQFSIC (67 aa)).

The protein localises to the membrane. This Xenopus laevis (African clawed frog) protein is Solute carrier family 66 member 2 (slc66a2).